Reading from the N-terminus, the 441-residue chain is Zinc finger and BTB domain-containing protein 8A (441 aa).

Residues 24-92 (CDCSILVEGK…VYSGKLSLTG (69 aa)) form the BTB domain. Residues 135–248 (LSDKDTGSNG…HVSQSEEQVQ (114 aa)) form a disordered region. Ser-161 and Ser-167 each carry phosphoserine. Glycyl lysine isopeptide (Lys-Gly) (interchain with G-Cter in SUMO2) cross-links involve residues Lys-178, Lys-182, and Lys-199. 2 stretches are compositionally biased toward basic and acidic residues: residues 198 to 208 (AKHEQRKDPIK) and 227 to 242 (GKGD…HVSQ). 2 consecutive C2H2-type zinc fingers follow at residues 282–304 (FKCP…LRCH) and 310–333 (YPCQ…RTIH). Lys-437 is covalently cross-linked (Glycyl lysine isopeptide (Lys-Gly) (interchain with G-Cter in SUMO2)).

It is found in the nucleus. In terms of biological role, may be involved in transcriptional regulation. This is Zinc finger and BTB domain-containing protein 8A (Zbtb8a) from Rattus norvegicus (Rat).